The following is a 221-amino-acid chain: Interleukin-12 subunit alpha (221 aa).

An N-terminal signal peptide occupies residues M1–G25. Cystine bridges form between C39/C112, C66/C198, and C87/C125. N-linked (GlcNAc...) asparagine glycosylation is present at N95.

This sequence belongs to the IL-6 superfamily. In terms of assembly, heterodimer with IL12B; disulfide-linked. This heterodimer is known as interleukin IL-12. Heterodimer with EBI3/IL27B; not disulfide-linked. This heterodimer is known as interleukin IL-35. Interacts with NBR1; this interaction promotes IL-12 secretion.

It is found in the secreted. Its function is as follows. Heterodimerizes with IL12B to form the IL-12 cytokine or with EBI3/IL27B to form the IL-35 cytokine. IL-12 is primarily produced by professional antigen-presenting cells (APCs) such as B-cells and dendritic cells (DCs) as well as macrophages and granulocytes and regulates T-cell and natural killer-cell responses, induces the production of interferon-gamma (IFN-gamma), favors the differentiation of T-helper 1 (Th1) cells and is an important link between innate resistance and adaptive immunity. Mechanistically, exerts its biological effects through a receptor composed of IL12R1 and IL12R2 subunits. Binding to the receptor results in the rapid tyrosine phosphorylation of a number of cellular substrates including the JAK family kinases TYK2 and JAK2. In turn, recruited STAT4 gets phosphorylated and translocates to the nucleus where it regulates cytokine/growth factor responsive genes. As part of IL-35, plays essential roles in maintaining the immune homeostasis of the liver microenvironment and also functions as an immune-suppressive cytokine. Mediates biological events through unconventional receptors composed of IL12RB2 and gp130/IL6ST heterodimers or homodimers. Signaling requires the transcription factors STAT1 and STAT4, which form a unique heterodimer that binds to distinct DNA sites. The polypeptide is Interleukin-12 subunit alpha (IL12A) (Bos taurus (Bovine)).